Here is a 397-residue protein sequence, read N- to C-terminus: Teichoic acid D-alanine hydrolase (397 aa).

The first 27 residues, Met1 to His27, serve as a signal peptide directing secretion.

Its subcellular location is the cell membrane. It catalyses the reaction [(4-D-Ala)-(2-GlcNAc)-Rib-ol-P]n-[Gro-P]m-beta-D-ManNAc-(1-&gt;4)-alpha-D-GlcNAc-P-peptidoglycan + n H2O = [(2-GlcNAc)-Rib-ol-P]n-[Gro-P]m-beta-D-ManNAc-(1-&gt;4)-alpha-D-GlcNAc-P-peptidoglycan + n D-alanine.. In terms of biological role, catalyzes the liberation of D-alanyl moieties present on wall teichoic acid (WTA) and lipoteichoic acid (LTA). Affects the methicillin resistance level and autolysis in the presence of Triton X-100 as well as the cell wall structure. This chain is Teichoic acid D-alanine hydrolase (fmtA), found in Staphylococcus aureus (strain MRSA252).